Here is a 268-residue protein sequence, read N- to C-terminus: LOB domain-containing protein 22 (268 aa).

The interval methionine 1–asparagine 31 is disordered. Positions serine 22–asparagine 31 are enriched in low complexity. The region spanning glutamine 35 to leucine 136 is the LOB domain.

It belongs to the LOB domain-containing protein family.

The polypeptide is LOB domain-containing protein 22 (LBD22) (Arabidopsis thaliana (Mouse-ear cress)).